A 116-amino-acid polypeptide reads, in one-letter code: Large ribosomal subunit protein bL19 (116 aa).

Belongs to the bacterial ribosomal protein bL19 family.

Its function is as follows. This protein is located at the 30S-50S ribosomal subunit interface and may play a role in the structure and function of the aminoacyl-tRNA binding site. This chain is Large ribosomal subunit protein bL19, found in Chloroflexus aggregans (strain MD-66 / DSM 9485).